A 95-amino-acid polypeptide reads, in one-letter code: MSIDIETARRVAHLARIRVDEADLPALAGELSGILTFMEQLNEVDVEGVEPMTSVTPMRLKRRQDVVTDGDMQDKVLANAPDAREGFFAVPKVVE.

It belongs to the GatC family. Heterotrimer of A, B and C subunits.

It catalyses the reaction L-glutamyl-tRNA(Gln) + L-glutamine + ATP + H2O = L-glutaminyl-tRNA(Gln) + L-glutamate + ADP + phosphate + H(+). It carries out the reaction L-aspartyl-tRNA(Asn) + L-glutamine + ATP + H2O = L-asparaginyl-tRNA(Asn) + L-glutamate + ADP + phosphate + 2 H(+). Its function is as follows. Allows the formation of correctly charged Asn-tRNA(Asn) or Gln-tRNA(Gln) through the transamidation of misacylated Asp-tRNA(Asn) or Glu-tRNA(Gln) in organisms which lack either or both of asparaginyl-tRNA or glutaminyl-tRNA synthetases. The reaction takes place in the presence of glutamine and ATP through an activated phospho-Asp-tRNA(Asn) or phospho-Glu-tRNA(Gln). In Cereibacter sphaeroides (strain ATCC 17025 / ATH 2.4.3) (Rhodobacter sphaeroides), this protein is Aspartyl/glutamyl-tRNA(Asn/Gln) amidotransferase subunit C.